A 78-amino-acid polypeptide reads, in one-letter code: Probable [Fe-S]-dependent transcriptional repressor (78 aa).

Residues Cys-56, Cys-61, Cys-64, and Cys-70 each coordinate iron-sulfur cluster.

The protein belongs to the FeoC family.

Its function is as follows. May function as a transcriptional regulator that controls feoABC expression. This Salmonella heidelberg (strain SL476) protein is Probable [Fe-S]-dependent transcriptional repressor.